A 441-amino-acid polypeptide reads, in one-letter code: Ribosomal protein uS12 methylthiotransferase RimO (441 aa).

In terms of domain architecture, MTTase N-terminal spans 8 to 118 (PKIGFVSLGC…VLEHVHHYVP (111 aa)). Cys17, Cys53, Cys82, Cys150, Cys154, and Cys157 together coordinate [4Fe-4S] cluster. The Radical SAM core domain occupies 136-373 (LTPRHYAYLK…MQLQQQISAE (238 aa)). Positions 376 to 441 (QEKVGREILV…DEYDLWGSRV (66 aa)) constitute a TRAM domain.

It belongs to the methylthiotransferase family. RimO subfamily. [4Fe-4S] cluster serves as cofactor.

It is found in the cytoplasm. It carries out the reaction L-aspartate(89)-[ribosomal protein uS12]-hydrogen + (sulfur carrier)-SH + AH2 + 2 S-adenosyl-L-methionine = 3-methylsulfanyl-L-aspartate(89)-[ribosomal protein uS12]-hydrogen + (sulfur carrier)-H + 5'-deoxyadenosine + L-methionine + A + S-adenosyl-L-homocysteine + 2 H(+). Catalyzes the methylthiolation of an aspartic acid residue of ribosomal protein uS12. The sequence is that of Ribosomal protein uS12 methylthiotransferase RimO from Citrobacter koseri (strain ATCC BAA-895 / CDC 4225-83 / SGSC4696).